The following is a 2152-amino-acid chain: Oxygen-regulated protein 1 (2152 aa).

A compositionally biased stretch (polar residues) spans 1 to 19 (MSDTPSTGFSIIHPTSSED). Residues 1-25 (MSDTPSTGFSIIHPTSSEDQVPPPR) are disordered. 2 Doublecortin domains span residues 36 to 118 (KRIS…VDLD) and 154 to 233 (RSLV…GNYD). 3 disordered regions span residues 353–375 (VSKT…RTES), 1435–1455 (DMEE…MTSS), and 1587–1616 (DWSD…ELAQ).

In terms of assembly, interacts (via the doublecortin domains) with microtubules. Interacts with RP1L1. Interacts with MAK.

It is found in the cytoplasm. The protein localises to the cytoskeleton. Its subcellular location is the cilium axoneme. The protein resides in the cell projection. It localises to the cilium. It is found in the photoreceptor outer segment. In terms of biological role, microtubule-associated protein regulating the stability and length of the microtubule-based axoneme of photoreceptors. Required for the differentiation of photoreceptor cells, it plays a role in the organization of the outer segment of rod and cone photoreceptors ensuring the correct orientation and higher-order stacking of outer segment disks along the photoreceptor axoneme. The sequence is that of Oxygen-regulated protein 1 (RP1) from Papio hamadryas (Hamadryas baboon).